We begin with the raw amino-acid sequence, 239 residues long: Lactate utilization protein A 1 (239 aa).

This sequence belongs to the LutA/YkgE family.

Its function is as follows. Is involved in L-lactate degradation and allows cells to grow with lactate as the sole carbon source. This chain is Lactate utilization protein A 1, found in Bacillus cereus (strain AH820).